Reading from the N-terminus, the 447-residue chain is Tubulin beta chain (447 aa).

GTP-binding residues include Gln-11, Glu-69, Ser-138, Gly-142, Thr-143, Gly-144, Asn-204, and Asn-226. Glu-69 lines the Mg(2+) pocket. Positions 424–447 are disordered; that stretch reads QYQEASVSEGEEEYDEEAPLEGEE. A compositionally biased stretch (acidic residues) spans 432-447; it reads EGEEEYDEEAPLEGEE.

The protein belongs to the tubulin family. As to quaternary structure, dimer of alpha and beta chains. A typical microtubule is a hollow water-filled tube with an outer diameter of 25 nm and an inner diameter of 15 nM. Alpha-beta heterodimers associate head-to-tail to form protofilaments running lengthwise along the microtubule wall with the beta-tubulin subunit facing the microtubule plus end conferring a structural polarity. Microtubules usually have 13 protofilaments but different protofilament numbers can be found in some organisms and specialized cells. The cofactor is Mg(2+).

The protein resides in the cytoplasm. It localises to the cytoskeleton. In terms of biological role, tubulin is the major constituent of microtubules, a cylinder consisting of laterally associated linear protofilaments composed of alpha- and beta-tubulin heterodimers. Microtubules grow by the addition of GTP-tubulin dimers to the microtubule end, where a stabilizing cap forms. Below the cap, tubulin dimers are in GDP-bound state, owing to GTPase activity of alpha-tubulin. This chain is Tubulin beta chain (TUB1), found in Dothistroma septosporum (Red band needle blight fungus).